The primary structure comprises 396 residues: S-adenosylmethionine synthase (396 aa).

An ATP-binding site is contributed by His-15. A Mg(2+)-binding site is contributed by Asp-17. Glu-43 contributes to the K(+) binding site. Positions 56 and 99 each coordinate L-methionine. Positions 99–109 are flexible loop; sequence QSADIALGVDR. ATP contacts are provided by residues 175 to 177, 241 to 242, Asp-250, 256 to 257, Ala-273, and Lys-277; these read DGK, RF, and RK. Asp-250 contributes to the L-methionine binding site. Lys-281 is an L-methionine binding site.

This sequence belongs to the AdoMet synthase family. In terms of assembly, homotetramer; dimer of dimers. Mg(2+) serves as cofactor. Requires K(+) as cofactor.

The protein localises to the cytoplasm. The enzyme catalyses L-methionine + ATP + H2O = S-adenosyl-L-methionine + phosphate + diphosphate. It functions in the pathway amino-acid biosynthesis; S-adenosyl-L-methionine biosynthesis; S-adenosyl-L-methionine from L-methionine: step 1/1. Catalyzes the formation of S-adenosylmethionine (AdoMet) from methionine and ATP. The overall synthetic reaction is composed of two sequential steps, AdoMet formation and the subsequent tripolyphosphate hydrolysis which occurs prior to release of AdoMet from the enzyme. This is S-adenosylmethionine synthase from Desulfitobacterium hafniense (strain DSM 10664 / DCB-2).